We begin with the raw amino-acid sequence, 199 residues long: Peroxiredoxin-1 (199 aa).

N-acetylserine is present on Ser-2. The 160-residue stretch at 6–165 folds into the Thioredoxin domain; sequence AKIGHRAPQF…TLRLVQAFQF (160 aa). Lys-7 carries the post-translational modification N6-acetyllysine; alternate. Lys-7 participates in a covalent cross-link: Glycyl lysine isopeptide (Lys-Gly) (interchain with G-Cter in SUMO2); alternate. An N6-acetyllysine mark is found at Lys-16 and Lys-27. The residue at position 35 (Lys-35) is an N6-acetyllysine; alternate. An N6-succinyllysine; alternate modification is found at Lys-35. The active-site Cysteine sulfenic acid (-SOH) intermediate is Cys-52. Phosphothreonine is present on Thr-90. Lys-120 is covalently cross-linked (Glycyl lysine isopeptide (Lys-Gly) (interchain with G-Cter in SUMO2)). Lys-136 is modified (N6-acetyllysine). Residues 176–199 form a disordered region; that stretch reads GWKPGSDTIKPDVQKSKEYFSKQK. Over residues 184 to 199 the composition is skewed to basic and acidic residues; that stretch reads IKPDVQKSKEYFSKQK. Lys-185 is covalently cross-linked (Glycyl lysine isopeptide (Lys-Gly) (interchain with G-Cter in SUMO1)). Lys-197 is modified (N6-acetyllysine).

The protein belongs to the peroxiredoxin family. AhpC/Prx1 subfamily. Homodimer; disulfide-linked, upon oxidation. 5 homodimers assemble to form a ring-like decamer. Interacts with GDPD5; forms a mixed-disulfide with GDPD5. Interacts with SESN1 and SESN2. Interacts with FAM107A. Post-translationally, phosphorylated on Thr-90 during the M-phase, which leads to a decrease in enzymatic activity. Acetylation increases reducing activity and resistance to superoxidation. Deacetylated by HDAC6 which decreases reducing activity.

It localises to the cytoplasm. The catalysed reaction is a hydroperoxide + [thioredoxin]-dithiol = an alcohol + [thioredoxin]-disulfide + H2O. Thiol-specific peroxidase that catalyzes the reduction of hydrogen peroxide and organic hydroperoxides to water and alcohols, respectively. Plays a role in cell protection against oxidative stress by detoxifying peroxides and as sensor of hydrogen peroxide-mediated signaling events. Might participate in the signaling cascades of growth factors and tumor necrosis factor-alpha by regulating the intracellular concentrations of H(2)O(2). Reduces an intramolecular disulfide bond in GDPD5 that gates the ability to GDPD5 to drive postmitotic motor neuron differentiation. The protein is Peroxiredoxin-1 (PRDX1) of Bos taurus (Bovine).